A 124-amino-acid polypeptide reads, in one-letter code: Small ribosomal subunit protein uS12 (124 aa).

Aspartate 89 carries the post-translational modification 3-methylthioaspartic acid. The tract at residues 104–124 (SAGVQNRNRGRSKYGTKRPKK) is disordered. Residues 111-124 (NRGRSKYGTKRPKK) are compositionally biased toward basic residues.

This sequence belongs to the universal ribosomal protein uS12 family. As to quaternary structure, part of the 30S ribosomal subunit. Contacts proteins S8 and S17. May interact with IF1 in the 30S initiation complex.

Functionally, with S4 and S5 plays an important role in translational accuracy. In terms of biological role, interacts with and stabilizes bases of the 16S rRNA that are involved in tRNA selection in the A site and with the mRNA backbone. Located at the interface of the 30S and 50S subunits, it traverses the body of the 30S subunit contacting proteins on the other side and probably holding the rRNA structure together. The combined cluster of proteins S8, S12 and S17 appears to hold together the shoulder and platform of the 30S subunit. This is Small ribosomal subunit protein uS12 from Pelotomaculum thermopropionicum (strain DSM 13744 / JCM 10971 / SI).